The following is a 208-amino-acid chain: Uracil phosphoribosyltransferase (208 aa).

5-phospho-alpha-D-ribose 1-diphosphate-binding positions include R78, R103, and 130 to 138 (DPMLATGGS). Uracil contacts are provided by residues I193 and 198 to 200 (GDA). Residue D199 coordinates 5-phospho-alpha-D-ribose 1-diphosphate.

The protein belongs to the UPRTase family. Mg(2+) serves as cofactor.

The enzyme catalyses UMP + diphosphate = 5-phospho-alpha-D-ribose 1-diphosphate + uracil. It functions in the pathway pyrimidine metabolism; UMP biosynthesis via salvage pathway; UMP from uracil: step 1/1. Its activity is regulated as follows. Allosterically activated by GTP. Functionally, catalyzes the conversion of uracil and 5-phospho-alpha-D-ribose 1-diphosphate (PRPP) to UMP and diphosphate. The chain is Uracil phosphoribosyltransferase from Escherichia fergusonii (strain ATCC 35469 / DSM 13698 / CCUG 18766 / IAM 14443 / JCM 21226 / LMG 7866 / NBRC 102419 / NCTC 12128 / CDC 0568-73).